The sequence spans 384 residues: Glucose-1-phosphate adenylyltransferase (384 aa).

Residues tyrosine 103, glycine 168, 183 to 184 (EK), and serine 194 contribute to the alpha-D-glucose 1-phosphate site.

This sequence belongs to the bacterial/plant glucose-1-phosphate adenylyltransferase family. Homotetramer.

It carries out the reaction alpha-D-glucose 1-phosphate + ATP + H(+) = ADP-alpha-D-glucose + diphosphate. It participates in glycan biosynthesis; glycogen biosynthesis. Its function is as follows. Involved in the biosynthesis of ADP-glucose, a building block required for the elongation reactions to produce glycogen. Catalyzes the reaction between ATP and alpha-D-glucose 1-phosphate (G1P) to produce pyrophosphate and ADP-Glc. In Fusobacterium nucleatum subsp. nucleatum (strain ATCC 25586 / DSM 15643 / BCRC 10681 / CIP 101130 / JCM 8532 / KCTC 2640 / LMG 13131 / VPI 4355), this protein is Glucose-1-phosphate adenylyltransferase.